Consider the following 127-residue polypeptide: uncharacterized protein (127 aa).

Residues 91 to 113 (IYLIVSIAVSILAIIAFFIFLML) traverse the membrane as a helical segment.

Its subcellular location is the membrane. This is an uncharacterized protein from Bacillus subtilis (strain 168).